Reading from the N-terminus, the 603-residue chain is Myotubularin (603 aa).

The span at M1–S13 shows a compositional bias: polar residues. A disordered region spans residues M1–G32. 2 positions are modified to phosphoserine: S13 and S18. Residues L14–G32 show a composition bias toward basic and acidic residues. The GRAM domain occupies R29 to G97. The Myotubularin phosphatase domain occupies G163–Y538. A 1,2-diacyl-sn-glycero-3-phospho-(1D-myo-inositol-3,5-bisphosphate) is bound by residues N288, N313, and I314. The a 1,2-diacyl-sn-glycero-3-phospho-(1D-myo-inositol-3-phosphate) site is built by N288, N313, and I314. C375 acts as the Phosphocysteine intermediate in catalysis. A 1,2-diacyl-sn-glycero-3-phospho-(1D-myo-inositol-3,5-bisphosphate) contacts are provided by S376, D377, G378, W379, D380, R381, K417, and R421. Residues S376, D377, G378, W379, D380, and R381 each coordinate a 1,2-diacyl-sn-glycero-3-phospho-(1D-myo-inositol-3-phosphate). R421 serves as a coordination point for a 1,2-diacyl-sn-glycero-3-phospho-(1D-myo-inositol-3-phosphate). T495 is subject to Phosphothreonine. A disordered region spans residues A580 to F603. The segment covering S583–S593 has biased composition (low complexity). Position 588 is a phosphoserine (S588).

The protein belongs to the protein-tyrosine phosphatase family. Non-receptor class myotubularin subfamily. In terms of assembly, heterodimer with MTMR12. Interacts with KMT2A/MLL1 (via SET domain). Interacts with DES in skeletal muscle but not in cardiac muscle. Interacts with SPEG.

It is found in the cytoplasm. It localises to the cell membrane. Its subcellular location is the cell projection. The protein resides in the filopodium. The protein localises to the ruffle. It is found in the late endosome. It localises to the myofibril. Its subcellular location is the sarcomere. The catalysed reaction is a 1,2-diacyl-sn-glycero-3-phospho-(1D-myo-inositol-3-phosphate) + H2O = a 1,2-diacyl-sn-glycero-3-phospho-(1D-myo-inositol) + phosphate. It catalyses the reaction a 1,2-diacyl-sn-glycero-3-phospho-(1D-myo-inositol-3,5-bisphosphate) + H2O = a 1,2-diacyl-sn-glycero-3-phospho-(1D-myo-inositol-5-phosphate) + phosphate. It carries out the reaction 1,2-dioctanoyl-sn-glycero-3-phospho-(1-D-myo-inositol-3-phosphate) + H2O = 1,2-dioctanoyl-sn-glycero-3-phospho-(1D-myo-inositol) + phosphate. The enzyme catalyses 1,2-dioctanoyl-sn-glycero-3-phospho-(1D-myo-inositol-3,5-bisphosphate) + H2O = 1,2-dioctanoyl-sn-glycero-3-phospho-(1D-myo-inositol-5-phosphate) + phosphate. The catalysed reaction is 1,2-dihexadecanoyl-sn-glycero-3-phospho-(1D-myo-inositol-3,5-phosphate) + H2O = 1,2-dihexadecanoyl-sn-glycero-3-phospho-(1D-myo-inositol-5-phosphate) + phosphate. Its activity is regulated as follows. Allosterically activated by phosphatidylinositol 5-phosphate (PI5P). Its function is as follows. Lipid phosphatase which dephosphorylates phosphatidylinositol 3-monophosphate (PI3P) and phosphatidylinositol 3,5-bisphosphate (PI(3,5)P2). Has also been shown to dephosphorylate phosphotyrosine- and phosphoserine-containing peptides. Negatively regulates EGFR degradation through regulation of EGFR trafficking from the late endosome to the lysosome. Plays a role in vacuolar formation and morphology. Regulates desmin intermediate filament assembly and architecture. Plays a role in mitochondrial morphology and positioning. Required for skeletal muscle maintenance but not for myogenesis. In skeletal muscles, stabilizes MTMR12 protein levels. The protein is Myotubularin of Bos taurus (Bovine).